Consider the following 111-residue polypeptide: Small ribosomal subunit protein mS38 (111 aa).

Over residues 82 to 99 the composition is skewed to basic residues; it reads RKRKKKMKKHKLRKRRKR. Positions 82–111 are disordered; it reads RKRKKKMKKHKLRKRRKREKAERRKLSQGR. Positions 100-111 are enriched in basic and acidic residues; the sequence is EKAERRKLSQGR.

Belongs to the mitochondrion-specific ribosomal protein mS38 family. In terms of assembly, component of the mitochondrial small ribosomal subunit (mt-SSU). Mature yeast 74S mitochondrial ribosomes consist of a small (37S) and a large (54S) subunit. The 37S small subunit contains a 15S ribosomal RNA (15S mt-rRNA) and 34 different proteins. The 54S large subunit contains a 21S rRNA (21S mt-rRNA) and 46 different proteins.

The protein resides in the mitochondrion. It is found in the mitochondrion inner membrane. In terms of biological role, component of the mitochondrial ribosome (mitoribosome), a dedicated translation machinery responsible for the synthesis of mitochondrial genome-encoded proteins, including at least some of the essential transmembrane subunits of the mitochondrial respiratory chain. The mitoribosomes are attached to the mitochondrial inner membrane and translation products are cotranslationally integrated into the membrane. mS38 is also involved in the splicing of the COX1 mRNA. The chain is Small ribosomal subunit protein mS38 (QRI5) from Saccharomyces cerevisiae (strain ATCC 204508 / S288c) (Baker's yeast).